We begin with the raw amino-acid sequence, 471 residues long: 3-isopropylmalate dehydratase large subunit (471 aa).

[4Fe-4S] cluster is bound by residues Cys-347, Cys-407, and Cys-410.

It belongs to the aconitase/IPM isomerase family. LeuC type 1 subfamily. As to quaternary structure, heterodimer of LeuC and LeuD. It depends on [4Fe-4S] cluster as a cofactor.

The enzyme catalyses (2R,3S)-3-isopropylmalate = (2S)-2-isopropylmalate. It functions in the pathway amino-acid biosynthesis; L-leucine biosynthesis; L-leucine from 3-methyl-2-oxobutanoate: step 2/4. Its function is as follows. Catalyzes the isomerization between 2-isopropylmalate and 3-isopropylmalate, via the formation of 2-isopropylmaleate. This is 3-isopropylmalate dehydratase large subunit from Prochlorococcus marinus (strain MIT 9211).